The primary structure comprises 294 residues: Pantothenate synthetase 3 (294 aa).

Position 31-38 (31-38) interacts with ATP; sequence MGALHEGH. The active-site Proton donor is the H38. Q62 provides a ligand contact to (R)-pantoate. Q62 is a binding site for beta-alanine. Residue 154–157 coordinates ATP; the sequence is GEKD. Position 160 (Q160) interacts with (R)-pantoate. An ATP-binding site is contributed by 191 to 194; that stretch reads LSSR.

It belongs to the pantothenate synthetase family. In terms of assembly, homodimer.

The protein localises to the cytoplasm. The catalysed reaction is (R)-pantoate + beta-alanine + ATP = (R)-pantothenate + AMP + diphosphate + H(+). It functions in the pathway cofactor biosynthesis; (R)-pantothenate biosynthesis; (R)-pantothenate from (R)-pantoate and beta-alanine: step 1/1. Its function is as follows. Catalyzes the condensation of pantoate with beta-alanine in an ATP-dependent reaction via a pantoyl-adenylate intermediate. The polypeptide is Pantothenate synthetase 3 (Frankia alni (strain DSM 45986 / CECT 9034 / ACN14a)).